Here is a 406-residue protein sequence, read N- to C-terminus: Peptide antibiotic transporter SbmA (406 aa).

Residues 1-11 (MFKSFFPKPGT) are Periplasmic-facing. The chain crosses the membrane as a helical span at residues 12–32 (FFLSAFVWALIAVIFWQAGGG). At 33-56 (DWVARITGASGQIPISAARFWSLD) the chain is on the cytoplasmic side. A helical transmembrane segment spans residues 57 to 77 (FLIFYAYYIVCVGLFALFWFI). Over 78–87 (YSPHRWQYWS) the chain is Periplasmic. A helical transmembrane segment spans residues 88–108 (ILGTALIIFVTWFLVEVGVAV). Over 109 to 137 (NAWYAPFYDLIQTALSSPHKVTIEQFYRE) the chain is Cytoplasmic. A helical membrane pass occupies residues 138–158 (VGVFLGIALIAVVISVLNNFF). Topologically, residues 159-205 (VSHYVFRWRTAMNEYYMANWQQLRHIEGAAQRVQEDTMRFASTLENM) are periplasmic. A helical transmembrane segment spans residues 206–226 (GVSFINAIMTLIAFLPVLVTL). Topologically, residues 227-242 (SAHVPELPIIGHIPYG) are cytoplasmic. The helical transmembrane segment at 243–263 (LVIAAIVWSLMGTGLLAVVGI) threads the bilayer. The Periplasmic segment spans residues 264-331 (KLPGLEFKNQ…ARILYLQVDN (68 aa)). Residues 332 to 352 (VFGLFLLFPSIVAGTITLGLM) traverse the membrane as a helical segment. At 353–406 (TQITNVFGQVRGAFQYLINSWTTLVELMSIYKRLRSFEHELDGDKIQEVTHTLS) the chain is on the cytoplasmic side.

The protein belongs to the peptide uptake permease (PUP) (TC 9.A.18) family.

It is found in the cell inner membrane. Uptake of antimicrobial peptides. This chain is Peptide antibiotic transporter SbmA (sbmA), found in Escherichia coli O157:H7.